The sequence spans 226 residues: Ribonuclease 3 (226 aa).

The RNase III domain maps to 2–129 (IETISKTIKY…LIGAIYLDGG (128 aa)). Glutamate 42 serves as a coordination point for Mg(2+). Residue aspartate 46 is part of the active site. Asparagine 115 and glutamate 118 together coordinate Mg(2+). Residue glutamate 118 is part of the active site. Positions 154–223 (DAKTILQEFI…ASLMLNQIKD (70 aa)) constitute a DRBM domain.

The protein belongs to the ribonuclease III family. In terms of assembly, homodimer. The cofactor is Mg(2+).

It localises to the cytoplasm. The enzyme catalyses Endonucleolytic cleavage to 5'-phosphomonoester.. Digests double-stranded RNA. Involved in the processing of primary rRNA transcript to yield the immediate precursors to the large and small rRNAs (23S and 16S). Processes some mRNAs, and tRNAs when they are encoded in the rRNA operon. Processes pre-crRNA and tracrRNA of type II CRISPR loci if present in the organism. This Ehrlichia canis (strain Jake) protein is Ribonuclease 3.